The primary structure comprises 534 residues: Chaperonin GroEL 3 (534 aa).

ATP is bound by residues 31–34 (TLGP), glycine 416, 479–481 (NAL), and aspartate 495.

This sequence belongs to the chaperonin (HSP60) family. In terms of assembly, forms a cylinder of 14 subunits composed of two heptameric rings stacked back-to-back. Interacts with the co-chaperonin GroES.

The protein localises to the cytoplasm. The catalysed reaction is ATP + H2O + a folded polypeptide = ADP + phosphate + an unfolded polypeptide.. Its function is as follows. Together with its co-chaperonin GroES, plays an essential role in assisting protein folding. The GroEL-GroES system forms a nano-cage that allows encapsulation of the non-native substrate proteins and provides a physical environment optimized to promote and accelerate protein folding. This is Chaperonin GroEL 3 from Protochlamydia amoebophila (strain UWE25).